Consider the following 219-residue polypeptide: Orotate phosphoribosyltransferase (219 aa).

Position 26 (K26) interacts with 5-phospho-alpha-D-ribose 1-diphosphate. An orotate-binding site is contributed by 34-35; the sequence is FF. 5-phospho-alpha-D-ribose 1-diphosphate contacts are provided by residues 72 to 73, R98, K99, K102, H104, and 124 to 132; these read YK and DDVITAGTA. The orotate site is built by T128 and R156.

Belongs to the purine/pyrimidine phosphoribosyltransferase family. PyrE subfamily. Homodimer. Requires Mg(2+) as cofactor.

It catalyses the reaction orotidine 5'-phosphate + diphosphate = orotate + 5-phospho-alpha-D-ribose 1-diphosphate. The protein operates within pyrimidine metabolism; UMP biosynthesis via de novo pathway; UMP from orotate: step 1/2. In terms of biological role, catalyzes the transfer of a ribosyl phosphate group from 5-phosphoribose 1-diphosphate to orotate, leading to the formation of orotidine monophosphate (OMP). The sequence is that of Orotate phosphoribosyltransferase from Xylella fastidiosa (strain M23).